A 298-amino-acid chain; its full sequence is Probable alpha-L-glutamate ligase (298 aa).

The ATP-grasp domain maps to 108-290 (LQLLLKTGVP…IAAEIIDYIE (183 aa)). ATP is bound by residues K144, 181 to 182 (DF), D190, and 214 to 216 (RAN). Positions 251, 263, and 265 each coordinate Mg(2+). Mn(2+) is bound by residues D251, E263, and N265.

Belongs to the RimK family. Requires Mg(2+) as cofactor. Mn(2+) is required as a cofactor.

This is Probable alpha-L-glutamate ligase from Haemophilus influenzae (strain PittEE).